Here is a 305-residue protein sequence, read N- to C-terminus: tRNA dimethylallyltransferase (305 aa).

Residue 12 to 19 (GPTASGKT) coordinates ATP. A substrate-binding site is contributed by 14–19 (TASGKT). Interaction with substrate tRNA stretches follow at residues 37–40 (DSAL), 161–165 (QRLAR), and 242–247 (RCVGYR).

The protein belongs to the IPP transferase family. In terms of assembly, monomer. Mg(2+) serves as cofactor.

It carries out the reaction adenosine(37) in tRNA + dimethylallyl diphosphate = N(6)-dimethylallyladenosine(37) in tRNA + diphosphate. Its function is as follows. Catalyzes the transfer of a dimethylallyl group onto the adenine at position 37 in tRNAs that read codons beginning with uridine, leading to the formation of N6-(dimethylallyl)adenosine (i(6)A). This is tRNA dimethylallyltransferase from Psychromonas ingrahamii (strain DSM 17664 / CCUG 51855 / 37).